Here is a 287-residue protein sequence, read N- to C-terminus: Probable 3-hydroxybutyryl-CoA dehydrogenase (287 aa).

It belongs to the 3-hydroxyacyl-CoA dehydrogenase family.

It catalyses the reaction (3S)-3-hydroxybutanoyl-CoA + NADP(+) = acetoacetyl-CoA + NADPH + H(+). Its pathway is lipid metabolism; butanoate metabolism. The protein is Probable 3-hydroxybutyryl-CoA dehydrogenase (mmgB) of Bacillus subtilis (strain 168).